A 92-amino-acid polypeptide reads, in one-letter code: Alpha-conotoxin-like Rt20.1 (92 aa).

Positions 1-24 are cleaved as a signal peptide; sequence MPKLEMMLLVLLILPLSYFSAAGG. Residues 25-45 constitute a propeptide that is removed on maturation; that stretch reads QVVQGDLRSDVLARYLQRGDR. A 4-carboxyglutamate modification is found at E49. P55 is subject to 4-hydroxyproline. 4 cysteine pairs are disulfide-bonded: C63/C72, C68/C80, C73/C90, and C78/C92.

This sequence belongs to the conotoxin D superfamily. Hetero-, homo- or pseudo-homodimer (identical sequence, different post-translational modifications). Expressed by the venom duct.

The protein localises to the secreted. In terms of biological role, alpha-conotoxins act on postsynaptic membranes, they bind to the nicotinic acetylcholine receptors (nAChR) and thus inhibit them. Through its two C-terminal domains, this homodimeric protein would bind to two nAChR allosteric sites, located outside the nAChR C-loop of the principal binding face and at the adjacent binding interface in a clockwise direction. This toxin specifically blocks mammalian neuronal nAChR of the alpha-7/CHRNA7, alpha-3-beta-2/CHRNA3-CHRNB2 and alpha-4-beta-2/CHRNA4-CHRNB2 subtypes. This Conus rattus (Rat cone) protein is Alpha-conotoxin-like Rt20.1.